A 230-amino-acid chain; its full sequence is NAD(P)H-hydrate epimerase (230 aa).

Residues 11-218 (AIDVDQELFT…ALQRKYGLNL (208 aa)) form the YjeF N-terminal domain. 61–65 (NNGGD) is a (6S)-NADPHX binding site. Positions 62 and 126 each coordinate K(+). Residues 130 to 136 (GFSFKPP) and aspartate 159 contribute to the (6S)-NADPHX site. Residue serine 162 coordinates K(+).

The protein belongs to the NnrE/AIBP family. It depends on K(+) as a cofactor.

It carries out the reaction (6R)-NADHX = (6S)-NADHX. The enzyme catalyses (6R)-NADPHX = (6S)-NADPHX. Catalyzes the epimerization of the S- and R-forms of NAD(P)HX, a damaged form of NAD(P)H that is a result of enzymatic or heat-dependent hydration. This is a prerequisite for the S-specific NAD(P)H-hydrate dehydratase to allow the repair of both epimers of NAD(P)HX. This is NAD(P)H-hydrate epimerase from Drosophila yakuba (Fruit fly).